We begin with the raw amino-acid sequence, 686 residues long: Alpha-amylase 1 (686 aa).

The active-site Nucleophile is glutamate 125. Aspartate 216 acts as the Proton donor in catalysis.

This sequence belongs to the glycosyl hydrolase 57 family.

Its subcellular location is the cytoplasm. It catalyses the reaction Endohydrolysis of (1-&gt;4)-alpha-D-glucosidic linkages in polysaccharides containing three or more (1-&gt;4)-alpha-linked D-glucose units.. This amylase is a highly liquefying-type: oligomers appeared at the beginning of incubation, followed by a graded decrease in the amounts of maltotriose, maltose and glucose in prolonged incubation. The sequence is that of Alpha-amylase 1 (amyA) from Dictyoglomus thermophilum (strain ATCC 35947 / DSM 3960 / H-6-12).